Here is a 209-residue protein sequence, read N- to C-terminus: Methylthioribulose-1-phosphate dehydratase (209 aa).

Zn(2+) is bound by residues His99 and His101.

Belongs to the aldolase class II family. MtnB subfamily. Zn(2+) is required as a cofactor.

The catalysed reaction is 5-(methylsulfanyl)-D-ribulose 1-phosphate = 5-methylsulfanyl-2,3-dioxopentyl phosphate + H2O. It functions in the pathway amino-acid biosynthesis; L-methionine biosynthesis via salvage pathway; L-methionine from S-methyl-5-thio-alpha-D-ribose 1-phosphate: step 2/6. Functionally, catalyzes the dehydration of methylthioribulose-1-phosphate (MTRu-1-P) into 2,3-diketo-5-methylthiopentyl-1-phosphate (DK-MTP-1-P). The sequence is that of Methylthioribulose-1-phosphate dehydratase from Leptospira biflexa serovar Patoc (strain Patoc 1 / Ames).